The following is a 1223-amino-acid chain: WD repeat-containing protein 11 (1223 aa).

2 WD repeats span residues 59-108 and 111-154; these read KHKA…AQCE and EHVK…KLWK. 2 positions are modified to phosphoserine: Ser-205 and Ser-209. The WD 3 repeat unit spans residues 354–393; sequence KTVRPFSMVCCPVNENAAALIVSDGRVMIWELKSAVCSRN. Residues Ser-401 and Ser-405 each carry the phosphoserine modification. WD repeat units follow at residues 470-509, 565-604, 707-744, 746-786, 792-830, and 892-939; these read RMCPPLTTKNIKTYQPLLAVGTSNGSVLVYHLTSGLLHKE, NDESPIEMIKVSHLKQYLAVVFKDKPLELWDIRTCTLLRE, GSMGSITCIAWKGDTLVLGDMDGNLNFWDLKARVSRGI, THRS…MVSS, NVTFRILDVDWCTSDKVILASDDGCIRVLEMSMKSTCFR, and ALSN…HSLS.

In terms of assembly, component of the complex WDR11 composed of C17orf75, FAM91A1 and WDR11; FAM91A1 and WDR11 are required for proper location of the complex. Interacts with GLI3; the interaction associateS EMX1 with GLI3. Interacts with TBC1D23; this interaction may be indirect and recruits TBC1D23 to AP-1-derived vesicles. Interacts (via the N-terminal and the central portion of the protein) with EMX1. Broadly expressed in various organs including brain, eye,ear, lung, heart, kideny and gonads. Cerebral cortex. The entire developing central nervous system, except for the spinal cord, reveals expression. Expressed in the neuroepithelium, including the diencephalic region that gives rise to hypothalamic neurons. In the adult brain, intense expression is restricted to the olfactory bulb, the olfaction-related piriform cortex, the granule cell layer of the cerebellum, and neurons of the hippocampal formation. The brain demonstrated expression scattered throughout the hypothalamus, sometimes in clusters of neurons.

The protein localises to the cytoplasm. It localises to the cytoskeleton. The protein resides in the cilium basal body. Its subcellular location is the nucleus. It is found in the cilium axoneme. The protein localises to the cytoplasmic vesicle. It localises to the golgi apparatus. The protein resides in the trans-Golgi network. Its function is as follows. Involved in the Hedgehog (Hh) signaling pathway, is essential for normal ciliogenesis. Regulates the proteolytic processing of GLI3 and cooperates with the transcription factor EMX1 in the induction of downstream Hh pathway gene expression and gonadotropin-releasing hormone production. WDR11 complex facilitates the tethering of Adaptor protein-1 complex (AP-1)-derived vesicles. WDR11 complex acts together with TBC1D23 to facilitate the golgin-mediated capture of vesicles generated using AP-1. This chain is WD repeat-containing protein 11 (Wdr11), found in Mus musculus (Mouse).